We begin with the raw amino-acid sequence, 236 residues long: LexA repressor (236 aa).

A DNA-binding region (H-T-H motif) is located at residues 26–46; it reads FDEMKEALDLASKSGIHRLIT. The tract at residues 84–107 is disordered; it reads SPSVIEGGQGRSSPAPRPAANNDD. Catalysis depends on for autocatalytic cleavage activity residues Ser157 and Lys195.

The protein belongs to the peptidase S24 family. As to quaternary structure, homodimer.

It catalyses the reaction Hydrolysis of Ala-|-Gly bond in repressor LexA.. In terms of biological role, represses a number of genes involved in the response to DNA damage (SOS response), including recA and lexA. In the presence of single-stranded DNA, RecA interacts with LexA causing an autocatalytic cleavage which disrupts the DNA-binding part of LexA, leading to derepression of the SOS regulon and eventually DNA repair. The polypeptide is LexA repressor (Chelativorans sp. (strain BNC1)).